Consider the following 851-residue polypeptide: MAKPLTDQEKRRQISIRGIVGVENVAELKKGFNRHLHFTLVKDRNVATPRDYFFALAHTVRDHLVGRWIRTQQYYYEKCPKRVYYLSLEFYMGRTLQNTMINLGLQNACDEAIYQLGLDMEELEEIEEDAGLGNGGLGRLAACFLDSMATLGLAAYGYGIRYEYGIFNQKIRDGWQIEEADDWLRHGNPWEKARPEFMLPVHFYGRVEHTEAGTKWTDTQVVLALPYDTPVPGYLNNTVNTMRLWSARAPNDFNLRDFNVGDYIQAVLDRNLAENISRVLYPNDNFFEGKELRLKQEYFVVAATLQDVIRRFKASKFDSSNSTKTAFDAFPDQVAIQLNDTHPSLAIPELMRIFVDIEKLPWSKAWEITQKTFAYTNHTVLPEALERWPVELVEKLLPRHLQIIYEINQKHLDKIAALFPKDVDRLRRMSLIEEEGGKRINMAHLCIVGSHAVNGVAKIHSDIVKTQVFKDFSELEPDKFQNKTNGITPRRWLLLCNPGLAELIAEKIGEDYVKDLSQLTKLNSFLGDDIFLREISNVKQENKLKFSQFLEKEYKVKINPSSMFDVQVKRIHEYKRQLLNCLHVVTMYNRIKKDPKKLFVPRTVIIGGKAAPGYYMAKLIIKLITSVAEVVNNDPVVGSKLKLIFLENYRVSLAEKVIPATDLSEQISTAGTEASGTGNMKFMLNGALTIGTMDGANVEMAEEAGEENLFIFGMRIEDVAALDKKGYEAKEYYEALPELKLAIDQIDKGFFSPKQPDLFKDLVNMLFYHDRFKVFADYEAYVKCQEKVSQLYMNPKAWNIMVLKNIAASGKFSSDRTIKEYARDIWNMEPSDIKISLSSDPSGGANKANGK.

Ala2 is subject to N-acetylalanine. Ser15 carries the post-translational modification Phosphoserine; by PHK; in form phosphorylase a. AMP contacts are provided by residues 43-45, Tyr76, and Arg310; that span reads DRN. At Lys364 the chain carries N6-succinyllysine. Lys470 is subject to N6-acetyllysine. A phosphoserine mark is found at Ser524, Ser561, and Ser639. Lys681 bears the N6-(pyridoxal phosphate)lysine mark. The residue at position 796 (Lys796) is an N6-acetyllysine.

This sequence belongs to the glycogen phosphorylase family. As to quaternary structure, homodimer; enzymatically active. Interacts with PPP1R3B; recruits the phosphatase PP1 which dephosphorylates and inactivates PYGL/glycogen phosphorylase. It depends on pyridoxal 5'-phosphate as a cofactor. Post-translationally, acetylation, which is up-regulated by glucose and insulin and down-regulated by glucagon, inhibits the glycogen phosphorylase activity by promoting PPP1R3B-mediated recruitment of phosphatase PP1 and Ser-15 dephosphorylation. In terms of processing, phosphorylation at Ser-15 converts inactive phosphorylase b into active phosphorylase a. Dephosphorylation of Ser-15 by phosphatase PP1 inactivates the enzyme.

It is found in the cytoplasm. It localises to the cytosol. It catalyses the reaction [(1-&gt;4)-alpha-D-glucosyl](n) + phosphate = [(1-&gt;4)-alpha-D-glucosyl](n-1) + alpha-D-glucose 1-phosphate. Allosterically regulated through the non-covalent binding of metabolites, being activated by AMP and inhibited by ATP, ADP, and glucose-6-phosphate. The activity is also controlled by post-translational modifications including phosphorylation and acetylation. Allosteric enzyme that catalyzes the rate-limiting step in glycogen catabolism, the phosphorolytic cleavage of glycogen to produce glucose-1-phosphate, and plays a central role in maintaining cellular and organismal glucose homeostasis. The chain is Glycogen phosphorylase, liver form from Bos taurus (Bovine).